The sequence spans 67 residues: Large ribosomal subunit protein bL35 (67 aa).

Belongs to the bacterial ribosomal protein bL35 family.

This chain is Large ribosomal subunit protein bL35, found in Sinorhizobium medicae (strain WSM419) (Ensifer medicae).